The sequence spans 345 residues: S-adenosylmethionine:tRNA ribosyltransferase-isomerase (345 aa).

The protein belongs to the QueA family. As to quaternary structure, monomer.

The protein resides in the cytoplasm. It catalyses the reaction 7-aminomethyl-7-carbaguanosine(34) in tRNA + S-adenosyl-L-methionine = epoxyqueuosine(34) in tRNA + adenine + L-methionine + 2 H(+). It participates in tRNA modification; tRNA-queuosine biosynthesis. Transfers and isomerizes the ribose moiety from AdoMet to the 7-aminomethyl group of 7-deazaguanine (preQ1-tRNA) to give epoxyqueuosine (oQ-tRNA). This is S-adenosylmethionine:tRNA ribosyltransferase-isomerase from Shewanella sp. (strain ANA-3).